A 351-amino-acid chain; its full sequence is Nicotinate-nucleotide--dimethylbenzimidazole phosphoribosyltransferase (351 aa).

The Proton acceptor role is filled by glutamate 317.

The protein belongs to the CobT family.

The catalysed reaction is 5,6-dimethylbenzimidazole + nicotinate beta-D-ribonucleotide = alpha-ribazole 5'-phosphate + nicotinate + H(+). The protein operates within nucleoside biosynthesis; alpha-ribazole biosynthesis; alpha-ribazole from 5,6-dimethylbenzimidazole: step 1/2. Its function is as follows. Catalyzes the synthesis of alpha-ribazole-5'-phosphate from nicotinate mononucleotide (NAMN) and 5,6-dimethylbenzimidazole (DMB). In Ectopseudomonas mendocina (strain ymp) (Pseudomonas mendocina), this protein is Nicotinate-nucleotide--dimethylbenzimidazole phosphoribosyltransferase.